We begin with the raw amino-acid sequence, 359 residues long: DNA polymerase IV (359 aa).

Residues 4–184 (IVHVDMDAFY…LKVNRIPGVG (181 aa)) form the UmuC domain. Mg(2+) is bound by residues aspartate 8 and aspartate 102. Glutamate 103 is a catalytic residue.

The protein belongs to the DNA polymerase type-Y family. Monomer. Mg(2+) serves as cofactor.

It is found in the cytoplasm. The catalysed reaction is DNA(n) + a 2'-deoxyribonucleoside 5'-triphosphate = DNA(n+1) + diphosphate. Poorly processive, error-prone DNA polymerase involved in untargeted mutagenesis. Copies undamaged DNA at stalled replication forks, which arise in vivo from mismatched or misaligned primer ends. These misaligned primers can be extended by PolIV. Exhibits no 3'-5' exonuclease (proofreading) activity. May be involved in translesional synthesis, in conjunction with the beta clamp from PolIII. The sequence is that of DNA polymerase IV from Xanthomonas oryzae pv. oryzae (strain MAFF 311018).